Reading from the N-terminus, the 784-residue chain is Homeobox-leucine zipper protein ROC2 (784 aa).

Positions 60–113 are disordered; it reads AESGDNMIRSRASDPLGGDEFESKSGSENVDGVSVDDQDPNQRPRKKRYHRHTQ. Residues 102 to 113 show a composition bias toward basic residues; the sequence is RPRKKRYHRHTQ. The homeobox DNA-binding region spans 104-163; it reads RKKRYHRHTQHQIQEMEAFFKECPHPDDKQRKELSRELGLEPLQVKFWFQNKRTQMKNQH. Residues 158–234 are a coiled coil; it reads QMKNQHERHE…DRISAIAAKY (77 aa). The START domain maps to 286–523; sequence SEVDKPMIVE…LDRQCERLAS (238 aa).

Belongs to the HD-ZIP homeobox family. Class IV subfamily.

It localises to the nucleus. In terms of biological role, probable transcription factor. This is Homeobox-leucine zipper protein ROC2 (ROC2) from Oryza sativa subsp. japonica (Rice).